The following is a 311-amino-acid chain: Taste receptor type 2 member 40 (311 aa).

Topologically, residues 1–9 are extracellular; sequence MSSLFSSFC. The chain crosses the membrane as a helical span at residues 10–30; sequence LVIAIFESVVGLLGNGTIVAV. Topologically, residues 31–55 are cytoplasmic; the sequence is SSTSCIRSKILSSYDVIVIFLSLSR. A helical membrane pass occupies residues 56–76; sequence FFLQLWMILDFLLIFFCQPSY. Residues 77-87 lie on the Extracellular side of the membrane; that stretch reads YEENLFVTFKT. The chain crosses the membrane as a helical span at residues 88–108; it reads VFIFLNSYSFWFAAWLSVFYC. The Cytoplasmic portion of the chain corresponds to 109 to 128; sequence VKVASFTQSFLSWLKQRIAS. Residues 129–149 traverse the membrane as a helical segment; it reads LIPWMLITSSLFSFATSLPFF. Topologically, residues 150-178 are extracellular; it reads WDSYNAHSNFTTPLTMTNSSKRITTRKTN. Residues 179–199 traverse the membrane as a helical segment; sequence LIFLILLCNVGIALPSIMLVF. Residues 200–235 lie on the Cytoplasmic side of the membrane; sequence SSILLIRSLWRHTRQMQNNATGFRDPSLEALIGAIK. The chain crosses the membrane as a helical span at residues 236 to 256; sequence TVFSFLLLYITNFIALILILS. Topologically, residues 257-266 are extracellular; that stretch reads DTFVPLSTEE. A helical membrane pass occupies residues 267 to 287; that stretch reads AICVVVVAACPAGQSMVLIWS. The Cytoplasmic portion of the chain corresponds to 288-311; that stretch reads NPRFRELLSSILHYVNSCVRARCS.

The protein belongs to the G-protein coupled receptor T2R family. As to expression, expressed in the oral cavity, as well as in the gastrointestinal tract, including in the upper palate, tongue, proventriculus, ventriculus, duodenum, jejunum, ileum, cecum and colon.

It localises to the cell membrane. In terms of biological role, bitter taste receptor. Binds quinine, dextromethorphan, diphenhydramine, diphenidol, chlorpheniramine, diphenidol, chloramphenicol, chloroquine and coumarin, this latter being a weak agonist, as well as epiquinidine, ethylhydrocupreine and quinidine. This chain is Taste receptor type 2 member 40 (TAS2R40), found in Gallus gallus (Chicken).